The chain runs to 405 residues: Acetate kinase (405 aa).

N7 is a binding site for Mg(2+). K14 contributes to the ATP binding site. R98 serves as a coordination point for substrate. The Proton donor/acceptor role is filled by D156. Residues 215-219 (HLGNG), 290-292 (DLR), and 338-342 (GVGEN) contribute to the ATP site. E391 provides a ligand contact to Mg(2+).

The protein belongs to the acetokinase family. In terms of assembly, homodimer. It depends on Mg(2+) as a cofactor. The cofactor is Mn(2+).

Its subcellular location is the cytoplasm. It carries out the reaction acetate + ATP = acetyl phosphate + ADP. The protein operates within metabolic intermediate biosynthesis; acetyl-CoA biosynthesis; acetyl-CoA from acetate: step 1/2. Catalyzes the formation of acetyl phosphate from acetate and ATP. Can also catalyze the reverse reaction. The sequence is that of Acetate kinase from Gloeobacter violaceus (strain ATCC 29082 / PCC 7421).